The chain runs to 120 residues: Small ribosomal subunit protein uS13 (120 aa).

The interval 97 to 120 (PVRGQRTKTNARTRKGKKKTVGAK) is disordered.

The protein belongs to the universal ribosomal protein uS13 family. Part of the 30S ribosomal subunit. Forms a loose heterodimer with protein S19. Forms two bridges to the 50S subunit in the 70S ribosome.

Functionally, located at the top of the head of the 30S subunit, it contacts several helices of the 16S rRNA. In the 70S ribosome it contacts the 23S rRNA (bridge B1a) and protein L5 of the 50S subunit (bridge B1b), connecting the 2 subunits; these bridges are implicated in subunit movement. Contacts the tRNAs in the A and P-sites. The chain is Small ribosomal subunit protein uS13 from Nitratiruptor sp. (strain SB155-2).